The primary structure comprises 218 residues: MGQKINPLGFRLGTTQSHHSLWFTQPKNYSEGLQEDQKIRDFIKNYVQKNLKISSGVEGIARIEIHKRIDLIQVIIYMGFPKLLIENRPGGIEKLQMNLQKEFNCVNRKLNITITRIAKPYGSPNILAEFIAGQLKNRVSFRKAMKKAIELTEQADTKGIQVQISGRIDGKEIARVEWIREGRVPLQTIRAKIDYCSYTVRTIYGVLGIKIWIFLDGE.

Residues 47 to 118 (VQKNLKISSG…KLNITITRIA (72 aa)) form the KH type-2 domain.

This sequence belongs to the universal ribosomal protein uS3 family. In terms of assembly, part of the 30S ribosomal subunit.

It is found in the plastid. The protein localises to the chloroplast. The chain is Small ribosomal subunit protein uS3c (rps3) from Daucus carota (Wild carrot).